The sequence spans 325 residues: 5-dehydro-2-deoxygluconokinase (325 aa).

This sequence belongs to the carbohydrate kinase PfkB family.

It carries out the reaction 5-dehydro-2-deoxy-D-gluconate + ATP = 6-phospho-5-dehydro-2-deoxy-D-gluconate + ADP + H(+). Its pathway is polyol metabolism; myo-inositol degradation into acetyl-CoA; acetyl-CoA from myo-inositol: step 5/7. Its function is as follows. Catalyzes the phosphorylation of 5-dehydro-2-deoxy-D-gluconate (2-deoxy-5-keto-D-gluconate or DKG) to 6-phospho-5-dehydro-2-deoxy-D-gluconate (DKGP). This chain is 5-dehydro-2-deoxygluconokinase, found in Listeria monocytogenes serotype 4a (strain HCC23).